A 437-amino-acid polypeptide reads, in one-letter code: UBX domain-containing protein 6 (437 aa).

2 disordered regions span residues 1–45 and 89–109; these read MNSF…AQGG and ERRQ…QPDR. Residues 7–18 are compositionally biased toward basic residues; that stretch reads FLNKKRVQNHFK. One can recognise a PUB domain in the interval 179–251; it reads ETAIETICKY…VFTKPSDVHL (73 aa). Residues 332-409 enclose the UBX domain; that stretch reads YRYKYTLIRV…SLAPAALLHV (78 aa).

Interacts with cdc-48.1 (via N-terminus) and cdc-48.2 (via N-terminus). In terms of tissue distribution, expressed in the pharynx and some head neurons.

Probably acts as an adapter for ATPase cdc-48.1 and/or cdc-48.2, conferring substrate specificity. Involved in the lysosomal clearance of cellular material in diet restricted conditions. The polypeptide is UBX domain-containing protein 6 (Caenorhabditis elegans).